The sequence spans 791 residues: RNA-directed RNA polymerase (791 aa).

The 117-residue stretch at 491–607 folds into the RdRp catalytic domain; sequence PVAIGFDMKR…ICEKECAAVV (117 aa).

Belongs to the tombusviridae RNA polymerase family.

The protein localises to the host mitochondrion. It catalyses the reaction RNA(n) + a ribonucleoside 5'-triphosphate = RNA(n+1) + diphosphate. Functionally, RNA-dependent RNA polymerase that plays an essential role in the virus replication. Induces the reorganization of host mitochondria and the formation of structures with numerous dilations surrounded by double membranes, which may provide a protected environment to viral replication. In Melon necrotic spot virus (MNSV), this protein is RNA-directed RNA polymerase.